The following is a 234-amino-acid chain: Large ribosomal subunit protein uL1 (234 aa).

It belongs to the universal ribosomal protein uL1 family. As to quaternary structure, part of the 50S ribosomal subunit.

Functionally, binds directly to 23S rRNA. The L1 stalk is quite mobile in the ribosome, and is involved in E site tRNA release. In terms of biological role, protein L1 is also a translational repressor protein, it controls the translation of the L11 operon by binding to its mRNA. This Maridesulfovibrio salexigens (strain ATCC 14822 / DSM 2638 / NCIMB 8403 / VKM B-1763) (Desulfovibrio salexigens) protein is Large ribosomal subunit protein uL1.